The sequence spans 179 residues: MSRIGKQPVTVPSGVDVTIDGQNVSVKGPKGTLTLDVAEPIAVTRDDDGAIVVTRPNDERRNRSLHGLSRTLIANLVTGVTEGYTTKMEIFGVGYRVVAKGSNLEFALGYSHPVLITAPEGVTFAVETPTKFSISGIDKQKVGQIAANIRRLRKSDPYKGKGIRYEGEQIRRKVGKTGK.

It belongs to the universal ribosomal protein uL6 family. As to quaternary structure, part of the 50S ribosomal subunit.

In terms of biological role, this protein binds to the 23S rRNA, and is important in its secondary structure. It is located near the subunit interface in the base of the L7/L12 stalk, and near the tRNA binding site of the peptidyltransferase center. In Mycolicibacterium vanbaalenii (strain DSM 7251 / JCM 13017 / BCRC 16820 / KCTC 9966 / NRRL B-24157 / PYR-1) (Mycobacterium vanbaalenii), this protein is Large ribosomal subunit protein uL6.